A 760-amino-acid chain; its full sequence is Phosphatidylinositol N-acetylglucosaminyltransferase subunit Q (760 aa).

A run of 5 helical transmembrane segments spans residues 278-298 (TVAS…WLHG), 349-371 (LYHI…HILW), 378-400 (CLGL…FHIY), 446-468 (LFIG…LYYL), and 475-497 (LLVV…LPLY). The tract at residues 696–748 (LAVGVEGPCQDEPPSPRHPLAPSAEQHPASGGLKQSLTPVPSGPGPSLPEPHG) is disordered.

This sequence belongs to the PIGQ family. Component of the glycosylphosphatidylinositol-N-acetylglucosaminyltransferase (GPI-GnT) complex composed at least by PIGA, PIGC, PIGH, PIGP, PIGQ, PIGY and DPM2. Interacts with PIGA, PIGH and PIGC.

It is found in the membrane. Its pathway is glycolipid biosynthesis; glycosylphosphatidylinositol-anchor biosynthesis. Part of the glycosylphosphatidylinositol-N-acetylglucosaminyltransferase (GPI-GnT) complex that catalyzes the transfer of N-acetylglucosamine from UDP-N-acetylglucosamine to phosphatidylinositol and participates in the first step of GPI biosynthesis. The sequence is that of Phosphatidylinositol N-acetylglucosaminyltransferase subunit Q from Homo sapiens (Human).